Consider the following 125-residue polypeptide: Small ribosomal subunit protein eS8 (125 aa).

Positions 1–20 (MLWQGESIRKVTGGRRRPAQ) are disordered.

It belongs to the eukaryotic ribosomal protein eS8 family. In terms of assembly, part of the 30S ribosomal subunit.

The protein is Small ribosomal subunit protein eS8 of Methanoregula boonei (strain DSM 21154 / JCM 14090 / 6A8).